A 601-amino-acid chain; its full sequence is Translation initiation factor IF-2 (601 aa).

Positions 54–101 (GHTASAEPAPAQASGSPASPAQTEAQEAPQPTATATAEREPAAPPARE) are disordered. Residues 57-89 (ASAEPAPAQASGSPASPAQTEAQEAPQPTATAT) show a composition bias toward low complexity. A tr-type G domain is found at 104–273 (HRAPVVTIMG…SLTAELEDLR (170 aa)). The interval 113-120 (GHVDHGKT) is G1. 113 to 120 (GHVDHGKT) serves as a coordination point for GTP. Residues 138–142 (GITQH) are G2. The tract at residues 159–162 (DTPG) is G3. GTP-binding positions include 159 to 163 (DTPGH) and 213 to 216 (NKVD). The tract at residues 213 to 216 (NKVD) is G4. The G5 stretch occupies residues 249 to 251 (SAK).

This sequence belongs to the TRAFAC class translation factor GTPase superfamily. Classic translation factor GTPase family. IF-2 subfamily.

Its subcellular location is the cytoplasm. Functionally, one of the essential components for the initiation of protein synthesis. Protects formylmethionyl-tRNA from spontaneous hydrolysis and promotes its binding to the 30S ribosomal subunits. Also involved in the hydrolysis of GTP during the formation of the 70S ribosomal complex. The protein is Translation initiation factor IF-2 of Deinococcus geothermalis (strain DSM 11300 / CIP 105573 / AG-3a).